Reading from the N-terminus, the 162-residue chain is NADH-quinone oxidoreductase subunit I (162 aa).

2 consecutive 4Fe-4S ferredoxin-type domains span residues 54–83 (RRYENGEERCIACKLCEAVCPALAITIESE) and 93–122 (TRYDIDLTKCIFCGFCEESCPVDSIVETQI). [4Fe-4S] cluster-binding residues include cysteine 63, cysteine 66, cysteine 69, cysteine 73, cysteine 102, cysteine 105, cysteine 108, and cysteine 112.

Belongs to the complex I 23 kDa subunit family. As to quaternary structure, NDH-1 is composed of 14 different subunits. Subunits NuoA, H, J, K, L, M, N constitute the membrane sector of the complex. [4Fe-4S] cluster is required as a cofactor.

The protein resides in the cell inner membrane. It catalyses the reaction a quinone + NADH + 5 H(+)(in) = a quinol + NAD(+) + 4 H(+)(out). Its function is as follows. NDH-1 shuttles electrons from NADH, via FMN and iron-sulfur (Fe-S) centers, to quinones in the respiratory chain. The immediate electron acceptor for the enzyme in this species is believed to be ubiquinone. Couples the redox reaction to proton translocation (for every two electrons transferred, four hydrogen ions are translocated across the cytoplasmic membrane), and thus conserves the redox energy in a proton gradient. The protein is NADH-quinone oxidoreductase subunit I of Burkholderia cenocepacia (strain ATCC BAA-245 / DSM 16553 / LMG 16656 / NCTC 13227 / J2315 / CF5610) (Burkholderia cepacia (strain J2315)).